The chain runs to 814 residues: ATP-dependent 6-phosphofructokinase 1 (814 aa).

An N-terminal catalytic PFK domain 1 region spans residues 1–420 (MDADASTITP…NLETYKLLTK (420 aa)). Residues Gly-55, 118-119 (RS), and 148-151 (GDGS) each bind ATP. Asp-149 is a binding site for Mg(2+). Substrate is bound by residues 194–196 (SID), Arg-231, 238–240 (MGR), Glu-294, Arg-322, and 328–331 (HVQR). Asp-196 (proton acceptor) is an active-site residue. The tract at residues 421–435 (MRTVEKDNLSEGHKF) is interdomain linker. The tract at residues 436–814 (NVAVINVGAP…EEESADSHMF (379 aa)) is C-terminal regulatory PFK domain 2. Residues Lys-505, 563 to 567 (TISNN), Arg-601, 608 to 610 (MGG), Glu-664, Arg-690, 696 to 699 (HVQQ), and Arg-771 contribute to the beta-D-fructose 2,6-bisphosphate site.

It belongs to the phosphofructokinase type A (PFKA) family. ATP-dependent PFK group I subfamily. Eukaryotic two domain clade 'E' sub-subfamily. In terms of assembly, homotetramer. Mg(2+) is required as a cofactor.

The protein localises to the cytoplasm. The enzyme catalyses beta-D-fructose 6-phosphate + ATP = beta-D-fructose 1,6-bisphosphate + ADP + H(+). It functions in the pathway carbohydrate degradation; glycolysis; D-glyceraldehyde 3-phosphate and glycerone phosphate from D-glucose: step 3/4. Its activity is regulated as follows. Allosterically activated by ADP, AMP, or fructose 2,6-bisphosphate, and allosterically inhibited by ATP or citrate. Its function is as follows. Catalyzes the phosphorylation of D-fructose 6-phosphate to fructose 1,6-bisphosphate by ATP, the first committing step of glycolysis. In Caenorhabditis elegans, this protein is ATP-dependent 6-phosphofructokinase 1.